The following is a 123-amino-acid chain: MDLIAQLEAEQIAALGKEIPDFKAGDTIRVGYKVTEGTRTRVQAYEGVCISRKNGSGIAGSFTVRKISFGEGVERVFPLYSTNIESIEVVRRGRVRRAKLYYLRSRRGKSARIAEDANYKAKA.

This sequence belongs to the bacterial ribosomal protein bL19 family.

Functionally, this protein is located at the 30S-50S ribosomal subunit interface and may play a role in the structure and function of the aminoacyl-tRNA binding site. The sequence is that of Large ribosomal subunit protein bL19 from Ruegeria sp. (strain TM1040) (Silicibacter sp.).